Here is a 1013-residue protein sequence, read N- to C-terminus: Mediator of RNA polymerase II transcription subunit 5 (1013 aa).

This sequence belongs to the Mediator complex subunit 5 family. In terms of assembly, component of the Mediator complex.

Its subcellular location is the nucleus. Component of the Mediator complex, a coactivator involved in the regulated transcription of nearly all RNA polymerase II-dependent genes. Mediator functions as a bridge to convey information from gene-specific regulatory proteins to the basal RNA polymerase II transcription machinery. Mediator is recruited to promoters by direct interactions with regulatory proteins and serves as a scaffold for the assembly of a functional preinitiation complex with RNA polymerase II and the general transcription factors. In Aspergillus oryzae (strain ATCC 42149 / RIB 40) (Yellow koji mold), this protein is Mediator of RNA polymerase II transcription subunit 5 (NUT1).